We begin with the raw amino-acid sequence, 440 residues long: Trigger factor (440 aa).

In terms of domain architecture, PPIase FKBP-type spans 163–248; the sequence is GMVLTVDFSF…LKEIKKKELP (86 aa).

It belongs to the FKBP-type PPIase family. Tig subfamily.

It is found in the cytoplasm. The catalysed reaction is [protein]-peptidylproline (omega=180) = [protein]-peptidylproline (omega=0). In terms of biological role, involved in protein export. Acts as a chaperone by maintaining the newly synthesized protein in an open conformation. Functions as a peptidyl-prolyl cis-trans isomerase. The chain is Trigger factor from Trichlorobacter lovleyi (strain ATCC BAA-1151 / DSM 17278 / SZ) (Geobacter lovleyi).